A 549-amino-acid chain; its full sequence is Thermosome subunit alpha (549 aa).

The disordered stretch occupies residues 529–549; that stretch reads EGRQGAECPPNGCMGGMDMRM.

Belongs to the TCP-1 chaperonin family. As to quaternary structure, forms a Heterooligomeric complex of two stacked eight-membered rings.

Its function is as follows. Molecular chaperone; binds unfolded polypeptides in vitro, and has a weak ATPase activity. The polypeptide is Thermosome subunit alpha (thsA) (Thermococcus sp. (strain KS-8)).